A 286-amino-acid chain; its full sequence is D-tagatose-1,6-bisphosphate aldolase subunit KbaY (286 aa).

The active-site Proton donor is the Asp82. The Zn(2+) site is built by His83 and His180. Gly181 serves as a coordination point for dihydroxyacetone phosphate. Residue His208 coordinates Zn(2+). Dihydroxyacetone phosphate contacts are provided by residues 209–211 (GAS) and 230–233 (NVAT).

Belongs to the class II fructose-bisphosphate aldolase family. TagBP aldolase KbaY subfamily. Homotetramer. Forms a complex with KbaZ. Zn(2+) is required as a cofactor.

It carries out the reaction D-tagatofuranose 1,6-bisphosphate = D-glyceraldehyde 3-phosphate + dihydroxyacetone phosphate. It participates in carbohydrate metabolism; D-tagatose 6-phosphate degradation; D-glyceraldehyde 3-phosphate and glycerone phosphate from D-tagatose 6-phosphate: step 2/2. Its function is as follows. Catalytic subunit of the tagatose-1,6-bisphosphate aldolase KbaYZ, which catalyzes the reversible aldol condensation of dihydroxyacetone phosphate (DHAP or glycerone-phosphate) with glyceraldehyde 3-phosphate (G3P) to produce tagatose 1,6-bisphosphate (TBP). Requires KbaZ subunit for full activity and stability. The polypeptide is D-tagatose-1,6-bisphosphate aldolase subunit KbaY (Escherichia coli O17:K52:H18 (strain UMN026 / ExPEC)).